Reading from the N-terminus, the 212-residue chain is ER lumen protein-retaining receptor 2 (212 aa).

The Lumenal segment spans residues 1-4 (MNVF). Residues 5–24 (RLSGDLSHLAAIIILLLKIW) traverse the membrane as a helical segment. Residues 25-32 (KSRSCAGI) lie on the Cytoplasmic side of the membrane. Residues 33-52 (SGKSQLLFALVFTTRYLDLL) form a helical membrane-spanning segment. The interaction with the K-D-E-L motif on target proteins stretch occupies residues 47-48 (RY). At 53-58 (TSFISL) the chain is on the lumenal side. Residues 59 to 79 (YNTSMKVIYIGCAYATVYLIY) form a helical membrane-spanning segment. Topologically, residues 80-92 (MKFKATYDGNHDT) are cytoplasmic. A helical membrane pass occupies residues 93–110 (FRVEFLVVPVGGLSVLVN). The Lumenal portion of the chain corresponds to 111 to 116 (HDFSPL). The helical transmembrane segment at 117–135 (EILWTFSIYLESVAILPQL) threads the bilayer. Residues 136–149 (FMISKTGEAETITT) are Cytoplasmic-facing. Residues 150 to 168 (HYLFFLGLYRALYLFNWIW) form a helical membrane-spanning segment. The tract at residues 159–169 (RALYLFNWIWR) is interaction with the K-D-E-L motif on target proteins. Over 169–178 (RYSFEGFFDL) the chain is Lumenal. A helical membrane pass occupies residues 179–199 (IAIVAGVVQTILYCDFFYLYV). Over 200 to 212 (TKVLKGKKLSLPA) the chain is Cytoplasmic. The interval 204–207 (KGKK) is important for recycling of cargo proteins with the sequence motif K-D-E-L from the Golgi to the endoplasmic reticulum.

The protein belongs to the ERD2 family.

Its subcellular location is the endoplasmic reticulum membrane. The protein localises to the golgi apparatus membrane. The protein resides in the cytoplasmic vesicle. It localises to the COPI-coated vesicle membrane. Functionally, receptor for the C-terminal sequence motif K-D-E-L that is present on endoplasmic reticulum resident proteins and that mediates their recycling from the Golgi back to the endoplasmic reticulum. Binding is pH dependent, and is optimal at pH 5-5.4. The sequence is that of ER lumen protein-retaining receptor 2 (kdelr2) from Xenopus tropicalis (Western clawed frog).